Reading from the N-terminus, the 350-residue chain is tRNA N6-adenosine threonylcarbamoyltransferase (350 aa).

Residues His-113 and His-117 each coordinate Fe cation. Residues 135–139 (LVSGG), Asp-169, Gly-182, Asp-186, and Asn-282 contribute to the substrate site. Asp-310 lines the Fe cation pocket.

The protein belongs to the KAE1 / TsaD family. The cofactor is Fe(2+).

It is found in the cytoplasm. It carries out the reaction L-threonylcarbamoyladenylate + adenosine(37) in tRNA = N(6)-L-threonylcarbamoyladenosine(37) in tRNA + AMP + H(+). Functionally, required for the formation of a threonylcarbamoyl group on adenosine at position 37 (t(6)A37) in tRNAs that read codons beginning with adenine. Is involved in the transfer of the threonylcarbamoyl moiety of threonylcarbamoyl-AMP (TC-AMP) to the N6 group of A37, together with TsaE and TsaB. TsaD likely plays a direct catalytic role in this reaction. This chain is tRNA N6-adenosine threonylcarbamoyltransferase, found in Corynebacterium diphtheriae (strain ATCC 700971 / NCTC 13129 / Biotype gravis).